We begin with the raw amino-acid sequence, 527 residues long: Sensory neuron membrane protein 1 (527 aa).

Topologically, residues Met-1–Gly-10 are cytoplasmic. A helical transmembrane segment spans residues Leu-11–Ile-31. Topologically, residues Leu-32–Arg-456 are extracellular. N-linked (GlcNAc...) asparagine glycans are attached at residues Asn-67 and Asn-229. 3 cysteine pairs are disulfide-bonded: Cys-268/Cys-333, Cys-297/Cys-352, and Cys-335/Cys-341. N-linked (GlcNAc...) asparagine glycosylation is present at Asn-440. The helical transmembrane segment at Ile-457–Leu-477 threads the bilayer. The Cytoplasmic portion of the chain corresponds to Val-478–Met-527.

Belongs to the CD36 family. In terms of tissue distribution, detected in both male and female antennal tissues. Expression is two to three fold higher in male compared to female antenna.

The protein resides in the cell membrane. Its function is as follows. Plays an olfactory role that is not restricted to pheromone sensitivity. The protein is Sensory neuron membrane protein 1 of Ostrinia furnacalis (Asian corn borer).